Consider the following 657-residue polypeptide: Macrolide export ATP-binding/permease protein MacB (657 aa).

Residues 5-242 enclose the ABC transporter domain; that stretch reads LELLDVHRTY…RAVTGESAFD (238 aa). 41–48 serves as a coordination point for ATP; it reads GASGSGKS. Helical transmembrane passes span 276-296, 538-558, 596-616, and 620-640; these read FLSV…MALG, IAAI…LVSV, IGVF…GWAV, and LLSV…FGLW.

Belongs to the ABC transporter superfamily. Macrolide exporter (TC 3.A.1.122) family. In terms of assembly, homodimer.

It localises to the cell inner membrane. In terms of biological role, non-canonical ABC transporter that contains transmembrane domains (TMD), which form a pore in the inner membrane, and an ATP-binding domain (NBD), which is responsible for energy generation. Confers resistance against macrolides. This chain is Macrolide export ATP-binding/permease protein MacB, found in Chlorobium phaeobacteroides (strain DSM 266 / SMG 266 / 2430).